The chain runs to 923 residues: Neuropilin-1 (923 aa).

Positions M1–A21 are cleaved as a signal peptide. Topologically, residues F22–P856 are extracellular. Disulfide bonds link C27-C54, C82-C104, and C147-C173. CUB domains lie at C27–F141 and C147–L265. N-linked (GlcNAc...) asparagine glycosylation is present at N150. Residues E195, D209, and D250 each contribute to the Ca(2+) site. C206 and C228 form a disulfide bridge. Residues N261, N300, and N522 are each glycosylated (N-linked (GlcNAc...) asparagine). 2 cysteine pairs are disulfide-bonded: C275–C424 and C431–C583. 2 consecutive F5/8 type C domains span residues C275–C424 and C431–C583. The O-linked (Xyl...) (chondroitin sulfate) serine; alternate glycan is linked to S612. S612 carries O-linked (Xyl...) (heparan sulfate) serine; alternate glycosylation. The MAM domain maps to T645–K811. The interval P820–R845 is disordered. O-linked (Xyl...) (chondroitin sulfate) serine glycosylation occurs at S829. N-linked (GlcNAc...) asparagine glycosylation occurs at N842. The helical transmembrane segment at I857–L879 threads the bilayer. Topologically, residues Y880 to A923 are cytoplasmic. S894 bears the Phosphoserine mark.

This sequence belongs to the neuropilin family. As to quaternary structure, homodimer, and heterodimer with NRP2. Interacts with FER. Interacts with PLXNB1. Interacts with VEGFA. Interacts with ABCB8/MITOSUR in mitochondria. In terms of assembly, (Microbial infection) Interacts with SARS coronavirus-2/SARS-CoV-2 spike protein S1 (via the CendR motif RRAR). In terms of tissue distribution, the expression of isoforms 1 and 2 does not seem to overlap. Expressed in olfactory epithelium (at protein level). Expressed in fibroblasts (at protein level). Expressed by the blood vessels of different tissues. In the developing embryo it is found predominantly in the nervous system. In adult tissues, it is highly expressed in heart and placenta; moderately in lung, liver, skeletal muscle, kidney and pancreas; and low in adult brain. Expressed in the central nervous system, including olfactory related regions such as the olfactory tubercles and paraolfactory gyri. The expression of isoforms 1 and 2 does not seem to overlap. Found in liver hepatocytes, kidney distal and proximal tubules.

It is found in the secreted. It localises to the mitochondrion membrane. Its subcellular location is the cell membrane. The protein localises to the cytoplasm. Cell-surface receptor involved in the development of the cardiovascular system, in angiogenesis, in the formation of certain neuronal circuits and in organogenesis outside the nervous system. Mediates the chemorepulsant activity of semaphorins. Recognizes a C-end rule (CendR) motif R/KXXR/K on its ligands which causes cellular internalization and vascular leakage. It binds to semaphorin 3A, the PLGF-2 isoform of PGF, the VEGF165 isoform of VEGFA and VEGFB. Coexpression with KDR results in increased VEGF165 binding to KDR as well as increased chemotaxis. Regulates VEGF-induced angiogenesis. Binding to VEGFA initiates a signaling pathway needed for motor neuron axon guidance and cell body migration, including for the caudal migration of facial motor neurons from rhombomere 4 to rhombomere 6 during embryonic development. Regulates mitochondrial iron transport via interaction with ABCB8/MITOSUR. Its function is as follows. (Microbial infection) Acts as a host factor for human coronavirus SARS-CoV-2 infection. Recognizes and binds to CendR motif RRAR on SARS-CoV-2 spike protein S1 which enhances SARS-CoV-2 infection. Functionally, binds VEGF-165 and may inhibit its binding to cells. May induce apoptosis by sequestering VEGF-165. May bind as well various members of the semaphorin family. Its expression has an averse effect on blood vessel number and integrity. The sequence is that of Neuropilin-1 from Homo sapiens (Human).